The primary structure comprises 777 residues: Glucocorticoid receptor (777 aa).

Positions 1 to 14 (MDSKESLTPGKEEN) are enriched in basic and acidic residues. Residues 1–22 (MDSKESLTPGKEENPSSVLTQE) are disordered. The segment at 1–420 (MDSKESLTPG…TATTGPPPKL (420 aa)) is modulating. A Phosphothreonine modification is found at Thr8. Arg23 bears the Omega-N-methylarginine mark. Residues Ser45, Ser113, Ser134, and Ser141 each carry the phosphoserine modification. The segment at 130-182 (NRSTSVPENPKSSASSSVSAAPKEKEFPKTHSDVSSEQQNLKGQTGSNGGNVK) is disordered. The segment covering 134–150 (SVPENPKSSASSSVSAA) has biased composition (low complexity). Residues 151-163 (PKEKEFPKTHSDV) are compositionally biased toward basic and acidic residues. A compositionally biased stretch (polar residues) spans 164–174 (SSEQQNLKGQT). Phosphoserine occurs at positions 203, 211, and 226. A Glycyl lysine isopeptide (Lys-Gly) (interchain with G-Cter in SUMO2) cross-link involves residue Lys258. Ser267 is subject to Phosphoserine. Residues Lys277 and Lys293 each participate in a glycyl lysine isopeptide (Lys-Gly) (interchain with G-Cter in SUMO); alternate cross-link. Glycyl lysine isopeptide (Lys-Gly) (interchain with G-Cter in SUMO2); alternate cross-links involve residues Lys277 and Lys293. Residues 394–414 (SSPSMRPDVSSPPSSSSTATT) are compositionally biased toward low complexity. The interval 394-415 (SSPSMRPDVSSPPSSSSTATTG) is disordered. Ser404 is subject to Phosphoserine. Residue Lys419 forms a Glycyl lysine isopeptide (Lys-Gly) (interchain with G-Cter in ubiquitin) linkage. 2 NR C4-type zinc fingers span residues 421 to 441 (CLVCSDEASGCHYGVLTCGSC) and 457 to 481 (CAGRNDCIIDKIRRKNCPACRYRKC). Residues 421-486 (CLVCSDEASG…RYRKCLQAGM (66 aa)) constitute a DNA-binding region (nuclear receptor). Lys480, Lys492, Lys494, and Lys495 each carry N6-acetyllysine. An interaction with CLOCK region spans residues 485–777 (GMNLEARKTK…NIKKLLFHQK (293 aa)). The hinge stretch occupies residues 487–523 (NLEARKTKKKIKGIQQATTGVSQETSENPANKTIVPA). An NR LBD domain is found at 524–758 (TLPQLTPTLV…FPEMLAEIIT (235 aa)). The interaction with CRY1 stretch occupies residues 532-697 (LVSLLEVIEP…EIRMTYIKEL (166 aa)). Residue Lys703 forms a Glycyl lysine isopeptide (Lys-Gly) (interchain with G-Cter in SUMO) linkage.

Belongs to the nuclear hormone receptor family. NR3 subfamily. As to quaternary structure, heteromultimeric cytoplasmic complex with HSP90AA1, HSPA1A/HSPA1B, and FKBP5 or another immunophilin such as PPID, STIP1, or the immunophilin homolog PPP5C. Upon ligand binding FKBP5 dissociates from the complex and FKBP4 takes its place, thereby linking the complex to dynein and mediating transport to the nucleus, where the complex dissociates. Probably forms a complex composed of chaperones HSP90 and HSP70, co-chaperones CDC37, PPP5C, TSC1 and client protein TSC2, CDK4, AKT, RAF1 and NR3C1; this complex does not contain co-chaperones STIP1/HOP and PTGES3/p23. Directly interacts with UNC45A. Binds to DNA as a homodimer, and as heterodimer with NR3C2 or the retinoid X receptor. Binds STAT5A and STAT5B homodimers and heterodimers. Interacts with NRIP1, POU2F1, POU2F2 and TRIM28. Interacts with several coactivator complexes, including the SMARCA4 complex, CREBBP/EP300, TADA2L (Ada complex) and p160 coactivators such as NCOA2 and NCOA6. Interaction with BAG1 inhibits transactivation. Interacts with HEXIM1 and TGFB1I1. Interacts with NCOA1. Interacts with NCOA3, SMARCA4, SMARCC1, SMARCD1, and SMARCE1. Interacts with CLOCK, CRY1 and CRY2 in a ligand-dependent fashion. Interacts with CIART. Interacts with RWDD3. Interacts with UBE2I/UBC9 and this interaction is enhanced in the presence of RWDD3. Interacts with GRIP1. Interacts with NR4A3 (via nuclear receptor DNA-binding domain), represses transcription activity of NR4A3 on the POMC promoter Nur response element (NurRE). Directly interacts with PNRC2 to attract and form a complex with UPF1 and DCP1A; the interaction leads to rapid mRNA degradation. Interacts with GSK3B. Interacts with FNIP1 and FNIP2. Interacts (via C-terminus) with HNRNPU (via C-terminus). Interacts with MCM3AP. Interacts (via domain NR LBD) with HSP90AA1 and HSP90AB1. In the absence of hormonal ligand, interacts with TACC1. Interacts (via NR LBD domain) with ZNF764 (via KRAB domain); the interaction regulates transcription factor activity of NR3C1 by directing its actions toward certain biologic pathways. Acetylation by CLOCK reduces its binding to glucocorticoid response elements and its transcriptional activity. Post-translationally, increased proteasome-mediated degradation in response to glucocorticoids. In terms of processing, phosphorylated in the absence of hormone; becomes hyperphosphorylated in the presence of glucocorticoid. The Ser-203, Ser-226 and Ser-404-phosphorylated forms are mainly cytoplasmic, and the Ser-211-phosphorylated form is nuclear. Phosphorylation at Ser-211 increases transcriptional activity. Phosphorylation at Ser-203, Ser-226 and Ser-404 decreases signaling capacity. Phosphorylation at Ser-404 may protect from glucocorticoid-induced apoptosis. Phosphorylation at Ser-203 and Ser-211 is not required in regulation of chromosome segregation. May be dephosphorylated by PPP5C, attenuates NR3C1 action. Ubiquitinated by UBR5, leading to its degradation: UBR5 specifically recognizes and binds ligand-bound NR3C1 when it is not associated with coactivators (NCOAs). In presence of NCOAs, the UBR5-degron is not accessible, preventing its ubiquitination and degradation. Post-translationally, sumoylation at Lys-277 and Lys-293 negatively regulates its transcriptional activity. Sumoylation at Lys-703 positively regulates its transcriptional activity in the presence of RWDD3. Sumoylation at Lys-277 and Lys-293 is dispensable whereas sumoylation at Lys-703 is critical for the stimulatory effect of RWDD3 on its transcriptional activity. Heat shock increases sumoylation in a RWDD3-dependent manner.

Its subcellular location is the cytoplasm. The protein localises to the nucleus. The protein resides in the mitochondrion. It is found in the cytoskeleton. It localises to the spindle. Its subcellular location is the microtubule organizing center. The protein localises to the centrosome. The protein resides in the chromosome. It is found in the nucleoplasm. In terms of biological role, receptor for glucocorticoids (GC). Has a dual mode of action: as a transcription factor that binds to glucocorticoid response elements (GRE), both for nuclear and mitochondrial DNA, and as a modulator of other transcription factors. Affects inflammatory responses, cellular proliferation and differentiation in target tissues. Involved in chromatin remodeling. Plays a role in rapid mRNA degradation by binding to the 5' UTR of target mRNAs and interacting with PNRC2 in a ligand-dependent manner which recruits the RNA helicase UPF1 and the mRNA-decapping enzyme DCP1A, leading to RNA decay. Could act as a coactivator for STAT5-dependent transcription upon growth hormone (GH) stimulation and could reveal an essential role of hepatic GR in the control of body growth. Mediates glucocorticoid-induced apoptosis. Promotes accurate chromosome segregation during mitosis. May act as a tumor suppressor. May play a negative role in adipogenesis through the regulation of lipolytic and antilipogenic gene expression. This chain is Glucocorticoid receptor (NR3C1), found in Saimiri boliviensis boliviensis (Bolivian squirrel monkey).